The following is a 347-amino-acid chain: Selenide, water dikinase (347 aa).

C17 is an active-site residue. Residues K20 and 48-50 (TRD) each bind ATP. D51 is a binding site for Mg(2+). Residues D68, D91, and 139–141 (GHS) contribute to the ATP site. Mg(2+) is bound at residue D91. Position 227 (D227) interacts with Mg(2+).

The protein belongs to the selenophosphate synthase 1 family. Class I subfamily. Homodimer. Requires Mg(2+) as cofactor.

The enzyme catalyses hydrogenselenide + ATP + H2O = selenophosphate + AMP + phosphate + 2 H(+). Functionally, synthesizes selenophosphate from selenide and ATP. This chain is Selenide, water dikinase, found in Salmonella typhi.